The chain runs to 266 residues: Norfluorocurarine synthase 1 (266 aa).

The AB hydrolase-1 domain maps to 11–121; sequence HFVLVHGAGH…VMPDAVNPPS (111 aa). Residues Ser-86, Asp-216, and His-244 contribute to the active site.

It belongs to the AB hydrolase superfamily. Homodimer.

The catalysed reaction is 17-dehydropreakuammicine + H2O = norfluorocurarine + methanol + CO2. The protein operates within alkaloid biosynthesis. In terms of biological role, hydrolase involved in the biosynthesis of curare monoterpene indole alkaloids (MIAs), natural products such as diaboline, a pharmacologically active compound used to regulate blood pressure. Curare alkaloids act as animal glycine receptor antagonists. Catalyzes the conversion of dehydropreakuammicine to norfluorocurarine. The protein is Norfluorocurarine synthase 1 of Strychnos sp.